The chain runs to 209 residues: Na(+)-translocating NADH-quinone reductase subunit D (209 aa).

5 helical membrane-spanning segments follow: residues 42–62 (LVMT…ISLI), 66–86 (IPNS…VIVV), 103–123 (VFVG…AYAM), 131–151 (FMDG…VGFV), and 178–198 (NGLF…IWGL).

The protein belongs to the NqrDE/RnfAE family. In terms of assembly, composed of six subunits; NqrA, NqrB, NqrC, NqrD, NqrE and NqrF.

It localises to the cell inner membrane. The enzyme catalyses a ubiquinone + n Na(+)(in) + NADH + H(+) = a ubiquinol + n Na(+)(out) + NAD(+). In terms of biological role, NQR complex catalyzes the reduction of ubiquinone-1 to ubiquinol by two successive reactions, coupled with the transport of Na(+) ions from the cytoplasm to the periplasm. NqrA to NqrE are probably involved in the second step, the conversion of ubisemiquinone to ubiquinol. The sequence is that of Na(+)-translocating NADH-quinone reductase subunit D from Yersinia pseudotuberculosis serotype O:1b (strain IP 31758).